Here is a 233-residue protein sequence, read N- to C-terminus: Small ribosomal subunit protein uS3 (233 aa).

The KH type-2 domain maps to V39–R107.

It belongs to the universal ribosomal protein uS3 family. As to quaternary structure, part of the 30S ribosomal subunit. Forms a tight complex with proteins S10 and S14.

In terms of biological role, binds the lower part of the 30S subunit head. Binds mRNA in the 70S ribosome, positioning it for translation. In Edwardsiella ictaluri (strain 93-146), this protein is Small ribosomal subunit protein uS3.